The primary structure comprises 72 residues: MLVITRKKGESLLIGDDIEVTVVKLDDGSVKLAIDAPKKLTILRKELYNEVQEENKKATNFNPSILKNIKSK.

This sequence belongs to the CsrA/RsmA family. Homodimer; the beta-strands of each monomer intercalate to form a hydrophobic core, while the alpha-helices form wings that extend away from the core.

It is found in the cytoplasm. Functionally, a translational regulator that binds mRNA to regulate translation initiation and/or mRNA stability. Usually binds in the 5'-UTR at or near the Shine-Dalgarno sequence preventing ribosome-binding, thus repressing translation. Its main target seems to be the major flagellin gene, while its function is anatagonized by FliW. This chain is Translational regulator CsrA, found in Clostridium botulinum (strain Okra / Type B1).